Reading from the N-terminus, the 644-residue chain is Pesticidal crystal protein Cry3Aa (644 aa).

The span at 1 to 13 (MNPNNRSEHDTIK) shows a compositional bias: basic and acidic residues. The tract at residues 1-20 (MNPNNRSEHDTIKTTENNEV) is disordered. The propeptide at 1-57 (MNPNNRSEHDTIKTTENNEVPTNHVQYPLAETPNPTLEDLNYKEFLRMTADNNTEAL) is removed in mature form.

Belongs to the delta endotoxin family.

Its function is as follows. Promotes colloidosmotic lysis by binding to the midgut epithelial cells of Coleoptera. The sequence is that of Pesticidal crystal protein Cry3Aa (cry3Aa) from Bacillus thuringiensis subsp. san diego.